The following is a 37-amino-acid chain: Large ribosomal subunit protein bL36c (37 aa).

This sequence belongs to the bacterial ribosomal protein bL36 family.

The protein localises to the plastid. Its subcellular location is the chloroplast. This is Large ribosomal subunit protein bL36c from Chaetosphaeridium globosum (Charophycean green alga).